The chain runs to 295 residues: Protease HtpX (295 aa).

A run of 2 helical transmembrane segments spans residues V5–L25 and A43–S63. H148 lines the Zn(2+) pocket. E149 is a catalytic residue. H152 lines the Zn(2+) pocket. 2 consecutive transmembrane segments (helical) span residues V159–I179 and F198–L218. E225 contributes to the Zn(2+) binding site.

Belongs to the peptidase M48B family. Zn(2+) serves as cofactor.

Its subcellular location is the cell inner membrane. This chain is Protease HtpX, found in Nitrosococcus oceani (strain ATCC 19707 / BCRC 17464 / JCM 30415 / NCIMB 11848 / C-107).